Consider the following 196-residue polypeptide: Large ribosomal subunit protein eL15 (196 aa).

The tract at residues 156–196 (HRGRAERGKTSAGRKGRGMRTRGRGTEKTRPSIRSHANQGK) is disordered. Over residues 167 to 178 (AGRKGRGMRTRG) the composition is skewed to basic residues.

Belongs to the eukaryotic ribosomal protein eL15 family.

The sequence is that of Large ribosomal subunit protein eL15 from Methanoregula boonei (strain DSM 21154 / JCM 14090 / 6A8).